Here is a 212-residue protein sequence, read N- to C-terminus: Thiamine-phosphate synthase (212 aa).

Residues 41–45 (QYREK) and D76 each bind 4-amino-2-methyl-5-(diphosphooxymethyl)pyrimidine. The Mg(2+) site is built by D77 and D96. Position 114 (S114) interacts with 4-amino-2-methyl-5-(diphosphooxymethyl)pyrimidine. 141 to 143 (TTS) contributes to the 2-[(2R,5Z)-2-carboxy-4-methylthiazol-5(2H)-ylidene]ethyl phosphate binding site. Position 144 (K144) interacts with 4-amino-2-methyl-5-(diphosphooxymethyl)pyrimidine. Residues G172 and 192 to 193 (IS) contribute to the 2-[(2R,5Z)-2-carboxy-4-methylthiazol-5(2H)-ylidene]ethyl phosphate site.

The protein belongs to the thiamine-phosphate synthase family. Mg(2+) is required as a cofactor.

The enzyme catalyses 2-[(2R,5Z)-2-carboxy-4-methylthiazol-5(2H)-ylidene]ethyl phosphate + 4-amino-2-methyl-5-(diphosphooxymethyl)pyrimidine + 2 H(+) = thiamine phosphate + CO2 + diphosphate. It carries out the reaction 2-(2-carboxy-4-methylthiazol-5-yl)ethyl phosphate + 4-amino-2-methyl-5-(diphosphooxymethyl)pyrimidine + 2 H(+) = thiamine phosphate + CO2 + diphosphate. It catalyses the reaction 4-methyl-5-(2-phosphooxyethyl)-thiazole + 4-amino-2-methyl-5-(diphosphooxymethyl)pyrimidine + H(+) = thiamine phosphate + diphosphate. Its pathway is cofactor biosynthesis; thiamine diphosphate biosynthesis; thiamine phosphate from 4-amino-2-methyl-5-diphosphomethylpyrimidine and 4-methyl-5-(2-phosphoethyl)-thiazole: step 1/1. Condenses 4-methyl-5-(beta-hydroxyethyl)thiazole monophosphate (THZ-P) and 2-methyl-4-amino-5-hydroxymethyl pyrimidine pyrophosphate (HMP-PP) to form thiamine monophosphate (TMP). This chain is Thiamine-phosphate synthase, found in Leuconostoc citreum (strain KM20).